Here is a 176-residue protein sequence, read N- to C-terminus: Ribosome maturation factor RimM (176 aa).

The region spanning 100-173 is the PRC barrel domain; that stretch reads KDEYHYHDLI…WLLINPPPGL (74 aa).

It belongs to the RimM family. In terms of assembly, binds ribosomal protein uS19.

The protein localises to the cytoplasm. In terms of biological role, an accessory protein needed during the final step in the assembly of 30S ribosomal subunit, possibly for assembly of the head region. Essential for efficient processing of 16S rRNA. May be needed both before and after RbfA during the maturation of 16S rRNA. It has affinity for free ribosomal 30S subunits but not for 70S ribosomes. This chain is Ribosome maturation factor RimM, found in Prochlorococcus marinus (strain NATL2A).